The following is a 551-amino-acid chain: Protein PLASTID TRANSCRIPTIONALLY ACTIVE 12, chloroplastic (551 aa).

A chloroplast-targeting transit peptide spans 1 to 47 (MASCSRTWLLPGMAPQATAQTVPRPLQSLKVFAGLPHRRRVLFSGVS). Disordered regions lie at residues 76 to 161 (SSYF…EGES) and 463 to 529 (HSYN…DQLS). Residues 109–119 (RVRAARAPAPV) show a composition bias toward low complexity. Acidic residues-rich tracts occupy residues 467–476 (EDSDDDEEDA) and 485–498 (SLED…DAED). The span at 505–516 (RNWSVLKTTGQA) shows a compositional bias: polar residues. Basic and acidic residues predominate over residues 518–529 (NPKEKSKKDQLS).

Component of the plastid-encoded plastid RNA polymerase (PEP) complex.

The protein localises to the plastid. Its subcellular location is the chloroplast. In terms of biological role, required for the activity of the plastid-encoded RNA polymerase (PEP) and full expression of genes transcribed by PEP. Required for the proper build-up and formation of the PEP-complex. Binds single-stranded (ss) DNA and RNA, but not double-stranded (ds) DNA. In Oryza sativa subsp. japonica (Rice), this protein is Protein PLASTID TRANSCRIPTIONALLY ACTIVE 12, chloroplastic.